Consider the following 211-residue polypeptide: FMN-dependent NADH:quinone oxidoreductase 3 (211 aa).

FMN is bound at residue 17–19; it reads SFS.

It belongs to the azoreductase type 1 family. Homodimer. FMN is required as a cofactor.

The enzyme catalyses 2 a quinone + NADH + H(+) = 2 a 1,4-benzosemiquinone + NAD(+). The catalysed reaction is N,N-dimethyl-1,4-phenylenediamine + anthranilate + 2 NAD(+) = 2-(4-dimethylaminophenyl)diazenylbenzoate + 2 NADH + 2 H(+). Functionally, quinone reductase that provides resistance to thiol-specific stress caused by electrophilic quinones. In terms of biological role, also exhibits azoreductase activity. Catalyzes the reductive cleavage of the azo bond in aromatic azo compounds to the corresponding amines. This Halalkalibacterium halodurans (strain ATCC BAA-125 / DSM 18197 / FERM 7344 / JCM 9153 / C-125) (Bacillus halodurans) protein is FMN-dependent NADH:quinone oxidoreductase 3.